A 185-amino-acid polypeptide reads, in one-letter code: MSGDVVAELKGRIDKSLEGLRTDLTRVRTGRASIAILEGVRVDYYGTPTPLSGVASVNAPEPRLITIKPWEKSVLKDIEKALREANLGINPMNDGEMIRLPFPPLTEERRKDIAKQVKTKGEEFKVTIRNLRRDANEVLKTQLKDKKITEDDHKRITEVVQKQTDAGITQVDEIVKKKEKEVMEV.

The protein belongs to the RRF family.

Its subcellular location is the cytoplasm. Responsible for the release of ribosomes from messenger RNA at the termination of protein biosynthesis. May increase the efficiency of translation by recycling ribosomes from one round of translation to another. The sequence is that of Ribosome-recycling factor from Myxococcus xanthus (strain DK1622).